The following is a 747-amino-acid chain: Transcription factor phm2 (747 aa).

A DNA-binding region (zn(2)-C6 fungal-type) is located at residues 21-50 (CNACRKRKRVRCDRLHPCSNCASRGLGSTC). Disordered regions lie at residues 112 to 150 (GLQN…DHGS) and 414 to 436 (TAEP…PESR).

The protein resides in the nucleus. Its function is as follows. Transcription factor that regulates the expression of the gene cluster that mediates the biosynthesis of the trans-fused decalin-containing tetramic acid phomasetin. The sequence is that of Transcription factor phm2 from Pyrenochaetopsis sp.